The following is a 189-amino-acid chain: Ras-like protein rasG (189 aa).

G10–S17 serves as a coordination point for GTP. The Effector region motif lies at Y32–Y40. Residues D57–Q61 and N116–D119 each bind GTP. Residues K169–L189 are disordered. A Cysteine methyl ester modification is found at C186. C186 carries the S-geranylgeranyl cysteine lipid modification. The propeptide at T187–L189 is removed in mature form.

This sequence belongs to the small GTPase superfamily. Ras family. In terms of assembly, interacts with ripA.

It is found in the cell membrane. It carries out the reaction GTP + H2O = GDP + phosphate + H(+). With respect to regulation, alternates between an inactive form bound to GDP and an active form bound to GTP. Activated by a guanine nucleotide-exchange factor (GEF) and inactivated by a GTPase-activating protein (GAP). In terms of biological role, ras proteins bind GDP/GTP and possess intrinsic GTPase activity. This is Ras-like protein rasG (rasG) from Dictyostelium discoideum (Social amoeba).